The primary structure comprises 264 residues: Phosphatidylglycerol--prolipoprotein diacylglyceryl transferase (264 aa).

7 helical membrane-spanning segments follow: residues 14-34 (IIFS…LIGF), 60-80 (LIYT…VFFY), 98-118 (GGMS…WVSF), 128-148 (ADFI…GNFI), 176-196 (SQLY…NWFI), 203-223 (GSVA…VEYV), and 240-260 (GQLL…WAYS). Arg143 lines the a 1,2-diacyl-sn-glycero-3-phospho-(1'-sn-glycerol) pocket.

This sequence belongs to the Lgt family.

The protein localises to the cell inner membrane. The enzyme catalyses L-cysteinyl-[prolipoprotein] + a 1,2-diacyl-sn-glycero-3-phospho-(1'-sn-glycerol) = an S-1,2-diacyl-sn-glyceryl-L-cysteinyl-[prolipoprotein] + sn-glycerol 1-phosphate + H(+). Its pathway is protein modification; lipoprotein biosynthesis (diacylglyceryl transfer). Functionally, catalyzes the transfer of the diacylglyceryl group from phosphatidylglycerol to the sulfhydryl group of the N-terminal cysteine of a prolipoprotein, the first step in the formation of mature lipoproteins. This Actinobacillus pleuropneumoniae serotype 7 (strain AP76) protein is Phosphatidylglycerol--prolipoprotein diacylglyceryl transferase.